A 187-amino-acid chain; its full sequence is Transcriptional repressor NrdR (187 aa).

A zinc finger lies at 3–34; it reads CPFCRHPDSRVVDSRTTDDGTSIRRRRQCPDC. An ATP-cone domain is found at 46-136; the sequence is LMVVKRSGVT…VYRAFDSLED (91 aa). The tract at residues 146–187 is disordered; that stretch reads EEQRERPAVDDEDHEDAGAERQGTDRGSGGTVEVPVPATVAD.

This sequence belongs to the NrdR family. Requires Zn(2+) as cofactor.

In terms of biological role, negatively regulates transcription of bacterial ribonucleotide reductase nrd genes and operons by binding to NrdR-boxes. The protein is Transcriptional repressor NrdR of Streptomyces avermitilis (strain ATCC 31267 / DSM 46492 / JCM 5070 / NBRC 14893 / NCIMB 12804 / NRRL 8165 / MA-4680).